The sequence spans 100 residues: Urease subunit gamma (100 aa).

It belongs to the urease gamma subunit family. In terms of assembly, heterotrimer of UreA (gamma), UreB (beta) and UreC (alpha) subunits. Three heterotrimers associate to form the active enzyme.

Its subcellular location is the cytoplasm. The catalysed reaction is urea + 2 H2O + H(+) = hydrogencarbonate + 2 NH4(+). It participates in nitrogen metabolism; urea degradation; CO(2) and NH(3) from urea (urease route): step 1/1. The chain is Urease subunit gamma from Leptothrix cholodnii (strain ATCC 51168 / LMG 8142 / SP-6) (Leptothrix discophora (strain SP-6)).